The primary structure comprises 246 residues: tRNA (guanine-N(7)-)-methyltransferase (246 aa).

S-adenosyl-L-methionine contacts are provided by Glu-77, Glu-102, Asp-129, and Asp-152. Asp-152 is a catalytic residue. Residues Lys-156, Asp-188, and 225-228 each bind substrate; that span reads TKFE.

Belongs to the class I-like SAM-binding methyltransferase superfamily. TrmB family.

It catalyses the reaction guanosine(46) in tRNA + S-adenosyl-L-methionine = N(7)-methylguanosine(46) in tRNA + S-adenosyl-L-homocysteine. Its pathway is tRNA modification; N(7)-methylguanine-tRNA biosynthesis. Catalyzes the formation of N(7)-methylguanine at position 46 (m7G46) in tRNA. The protein is tRNA (guanine-N(7)-)-methyltransferase of Haemophilus influenzae (strain 86-028NP).